Consider the following 208-residue polypeptide: Uracil phosphoribosyltransferase (208 aa).

Residues arginine 78, arginine 103, and 130–138 (DPMLATGGS) contribute to the 5-phospho-alpha-D-ribose 1-diphosphate site. Residues isoleucine 193 and 198–200 (GDA) contribute to the uracil site. Residue aspartate 199 coordinates 5-phospho-alpha-D-ribose 1-diphosphate.

It belongs to the UPRTase family. Mg(2+) serves as cofactor.

It carries out the reaction UMP + diphosphate = 5-phospho-alpha-D-ribose 1-diphosphate + uracil. The protein operates within pyrimidine metabolism; UMP biosynthesis via salvage pathway; UMP from uracil: step 1/1. Its activity is regulated as follows. Allosterically activated by GTP. Its function is as follows. Catalyzes the conversion of uracil and 5-phospho-alpha-D-ribose 1-diphosphate (PRPP) to UMP and diphosphate. The chain is Uracil phosphoribosyltransferase from Enterobacter sp. (strain 638).